A 440-amino-acid polypeptide reads, in one-letter code: Damage-control phosphatase ARMT1 (440 aa).

Mn(2+)-binding residues include Asp252 and Asn253. Position 252–253 (252–253 (DN)) interacts with substrate. S-adenosyl-L-methionine contacts are provided by Glu257 and Asp290. Asp290 lines the Mn(2+) pocket. Substrate-binding positions include 366-370 (DLNYR) and Lys403. Residues 400–403 (RTLK) carry the Subfamily III RTxK motif motif.

The protein belongs to the damage-control phosphatase family. Sugar phosphate phosphatase III subfamily. It depends on Mn(2+) as a cofactor. Requires Ni(2+) as cofactor. In terms of processing, automethylated.

The catalysed reaction is beta-D-fructose 1-phosphate + H2O = D-fructose + phosphate. The enzyme catalyses beta-D-fructose 6-phosphate = dihydroxyacetone + D-glyceraldehyde 3-phosphate. It catalyses the reaction L-glutamyl-[protein] + S-adenosyl-L-methionine = [protein]-L-glutamate 5-O-methyl ester + S-adenosyl-L-homocysteine. Metal-dependent phosphatase that shows phosphatase activity against several substrates, including fructose-1-phosphate and fructose-6-phosphate. Its preference for fructose-1-phosphate, a strong glycating agent that causes DNA damage rather than a canonical yeast metabolite, suggests a damage-control function in hexose phosphate metabolism. Has also been shown to have O-methyltransferase activity that methylates glutamate residues of target proteins to form gamma-glutamyl methyl ester residues. Possibly methylates PCNA, suggesting it is involved in the DNA damage response. The protein is Damage-control phosphatase ARMT1 of Xenopus tropicalis (Western clawed frog).